The following is a 271-amino-acid chain: 3-methyl-2-oxobutanoate hydroxymethyltransferase (271 aa).

Residues aspartate 51 and aspartate 90 each coordinate Mg(2+). Residues aspartate 51 to serine 52, aspartate 90, and lysine 118 contribute to the 3-methyl-2-oxobutanoate site. Glutamate 120 serves as a coordination point for Mg(2+). Glutamate 186 acts as the Proton acceptor in catalysis.

Belongs to the PanB family. In terms of assembly, homodecamer; pentamer of dimers. Requires Mg(2+) as cofactor.

The protein resides in the cytoplasm. The enzyme catalyses 3-methyl-2-oxobutanoate + (6R)-5,10-methylene-5,6,7,8-tetrahydrofolate + H2O = 2-dehydropantoate + (6S)-5,6,7,8-tetrahydrofolate. It participates in cofactor biosynthesis; (R)-pantothenate biosynthesis; (R)-pantoate from 3-methyl-2-oxobutanoate: step 1/2. Catalyzes the reversible reaction in which hydroxymethyl group from 5,10-methylenetetrahydrofolate is transferred onto alpha-ketoisovalerate to form ketopantoate. This chain is 3-methyl-2-oxobutanoate hydroxymethyltransferase, found in Xanthomonas euvesicatoria pv. vesicatoria (strain 85-10) (Xanthomonas campestris pv. vesicatoria).